The primary structure comprises 114 residues: Amphinase-2 (114 aa).

H15 acts as the Proton acceptor in catalysis. 4 cysteine pairs are disulfide-bonded: C26-C79, C41-C85, C59-C100, and C97-C114. N-linked (GlcNAc...) asparagine glycosylation is present at N27. K42–T46 is a binding site for substrate. N67 and N91 each carry an N-linked (GlcNAc...) asparagine glycan. The Proton donor role is filled by H107.

The protein belongs to the pancreatic ribonuclease family. As to quaternary structure, monomer. In terms of processing, there are at least four different forms arising from glycan heterogeneity.

It is found in the secreted. In terms of biological role, endonuclease, hydrolyzes highly polymerized RNA, poly(U) and poly(C), and the dinucleotides CpA and UpA. Hydrolyzes 18S and 28S ribosomal RNA. More active towards rCA than rUA or rUG. Has cytotoxic activity against cultured human submaxillary gland carcinoma cells. This chain is Amphinase-2, found in Lithobates pipiens (Northern leopard frog).